Here is a 173-residue protein sequence, read N- to C-terminus: Atrial gland and califin peptides (173 aa).

The signal sequence occupies residues 1-21 (MKANTMFIILCLSLSTLCVSS). A propeptide spanning residues 22–34 (QSTSVHGKIFVPN) is cleaved from the precursor. I69 carries the post-translational modification Isoleucine amide. Positions 73 to 114 (AAGEMEQSEGQNPETKSHSWRKRSVLTPSLSSLGESLESGIS) are excised as a propeptide. Residues 75-94 (GEMEQSEGQNPETKSHSWRK) form a disordered region. C141 and C172 are disulfide-bonded. At L152 the chain carries Leucine amide.

Belongs to the molluscan ELH family. In terms of assembly, califin A consists of a 36-residue large subunit bound by a single disulfide bond to a 18-residue small subunit.

The protein localises to the secreted. Functionally, the atrial gland peptide A and peptide B precursors are the source of the 2 peptides that, upon release from this reproductive system gland, initiate the egg-laying process by exciting the bag cell neurons. These neurons, clustered in neural connectives near the abdominal ganglion, in turn release other peptides that act directly on the ganglion and also, via the circulating hemolymph, on many other organs to control the physiological processes of egg-laying. One of these other peptides is the egg-laying hormone. Injected in sexually mature animals califin A excites LB and LC cells of the abdominal ganglion and causes egg-laying. The sequence is that of Atrial gland and califin peptides from Aplysia californica (California sea hare).